The chain runs to 247 residues: Cationic trypsin-3 (247 aa).

The N-terminal stretch at 1–15 (MKALIFLAFLGAAVA) is a signal peptide. The propeptide at 16 to 24 (LPLDDDDDK) is activation peptide. The Peptidase S1 domain maps to 25–245 (IVGGYTCQKN…YVNWIQQTVA (221 aa)). Disulfide bonds link Cys31-Cys161, Cys49-Cys65, Cys133-Cys234, Cys140-Cys207, Cys172-Cys186, and Cys197-Cys221. Catalysis depends on His64, which acts as the Charge relay system. Ca(2+) contacts are provided by Glu76, Asn78, Val81, and Glu86. Asp108 serves as the catalytic Charge relay system. Ser201 acts as the Charge relay system in catalysis.

It belongs to the peptidase S1 family. Ca(2+) serves as cofactor.

It is found in the secreted. The protein resides in the extracellular space. The enzyme catalyses Preferential cleavage: Arg-|-Xaa, Lys-|-Xaa.. The chain is Cationic trypsin-3 (Try3) from Rattus norvegicus (Rat).